A 289-amino-acid chain; its full sequence is Inorganic pyrophosphatase (289 aa).

N-acetylserine is present on serine 2. Lysine 57 bears the N6-acetyllysine mark. Residues aspartate 116, aspartate 121, and aspartate 153 each contribute to the Mg(2+) site. Lysine 228 is subject to N6-acetyllysine. A Phosphoserine modification is found at serine 250.

Belongs to the PPase family. In terms of assembly, homodimer. It depends on Mg(2+) as a cofactor. As to expression, expressed ubiquitously.

Its subcellular location is the cytoplasm. It catalyses the reaction diphosphate + H2O = 2 phosphate + H(+). This Homo sapiens (Human) protein is Inorganic pyrophosphatase (PPA1).